Reading from the N-terminus, the 483-residue chain is FAD-linked oxidoreductase easE (483 aa).

Positions 10-193 constitute an FAD-binding PCMH-type domain; sequence QGRLPFYSAV…TEATVRVFSD (184 aa).

Belongs to the oxygen-dependent FAD-linked oxidoreductase family. FAD serves as cofactor.

It functions in the pathway alkaloid biosynthesis; ergot alkaloid biosynthesis. Functionally, FAD-linked oxidoreductase; part of the gene cluster that mediates the biosynthesis of fungal ergot alkaloid. DmaW catalyzes the first step of ergot alkaloid biosynthesis by condensing dimethylallyl diphosphate (DMAP) and tryptophan to form 4-dimethylallyl-L-tryptophan. The second step is catalyzed by the methyltransferase easF that methylates 4-dimethylallyl-L-tryptophan in the presence of S-adenosyl-L-methionine, resulting in the formation of 4-dimethylallyl-L-abrine. The catalase easC and the FAD-dependent oxidoreductase easE then transform 4-dimethylallyl-L-abrine to chanoclavine-I which is further oxidized by easD in the presence of NAD(+), resulting in the formation of chanoclavine-I aldehyde. Agroclavine dehydrogenase easG then mediates the conversion of chanoclavine-I aldehyde to agroclavine via a non-enzymatic adduct reaction: the substrate is an iminium intermediate that is formed spontaneously from chanoclavine-I aldehyde in the presence of glutathione. The presence of easA is not required to complete this reaction. Further conversion of agroclavine to paspalic acid is a two-step process involving oxidation of agroclavine to elymoclavine and of elymoclavine to paspalic acid, the second step being performed by the elymoclavine oxidase cloA. Paspalic acid is then further converted to D-lysergic acid. Ergopeptines are assembled from D-lysergic acid and three different amino acids by the D-lysergyl-peptide-synthetases composed each of a monomudular and a trimodular nonribosomal peptide synthetase subunit. LpsB and lpsC encode the monomodular subunits responsible for D-lysergic acid activation and incorporation into the ergopeptine backbone. LpsA1 and A2 subunits encode the trimodular nonribosomal peptide synthetase assembling the tripeptide portion of ergopeptines. LpsA1 is responsible for formation of the major ergopeptine, ergotamine, and lpsA2 for alpha-ergocryptine, the minor ergopeptine of the total alkaloid mixture elaborated by C.purpurea. D-lysergyl-tripeptides are assembled by the nonribosomal peptide synthetases and released as N-(D-lysergyl-aminoacyl)-lactams. Cyclolization of the D-lysergyl-tripeptides is performed by the Fe(2+)/2-ketoglutarate-dependent dioxygenase easH which introduces a hydroxyl group into N-(D-lysergyl-aminoacyl)-lactam at alpha-C of the aminoacyl residue followed by spontaneous condensation with the terminal lactam carbonyl group. This is FAD-linked oxidoreductase easE from Claviceps purpurea (strain 20.1) (Ergot fungus).